Here is a 388-residue protein sequence, read N- to C-terminus: MVLPTAPEPPTLLGYHRILSSSAGVRVSPLCLGTMSFGNGWKGVMGECDQATSFNMLDTFYESGGNFIDVANFYQGGDSERWVGEWMAQRQNRDEIVLSTKYTMGYTMFGPQKIKSNYQGNHTKSLRLSVKASLQKLQTDYIDLLYVHMWDFTTSVEEVMRSLNHLVANGKVLYLGVSDTPAWLVVKCNAFARANGLTPFSVYQGHWSCAFRDFERDILPMCESEGMGLAPWGVLGRGQFRSAEDFSREGRKMGPQDEKHRRLGEKLDQMAQQKNTKATSIAQAYVMHKAPYVFPVIGGRKVEHLKENIEALGLVLSEEEIREIDDAEPFDVGFPMNFLFETPTQSYRTNMTSKDIWQLSCNTRLETVPKQQPIEPFQGAKYFGSASK.

Residue Tyr74 is the Proton donor of the active site. 233–243 (GVLGRGQFRSA) lines the NADP(+) pocket.

It belongs to the aldo/keto reductase family. Aldo/keto reductase 2 subfamily.

The protein operates within mycotoxin biosynthesis; aflatoxin biosynthesis. This Aspergillus flavus (strain ATCC 200026 / FGSC A1120 / IAM 13836 / NRRL 3357 / JCM 12722 / SRRC 167) protein is Norsolorinic acid reductase (norA).